The chain runs to 92 residues: Small ribosomal subunit protein uS19 (92 aa).

This sequence belongs to the universal ribosomal protein uS19 family.

In terms of biological role, protein S19 forms a complex with S13 that binds strongly to the 16S ribosomal RNA. The chain is Small ribosomal subunit protein uS19 from Buchnera aphidicola subsp. Schizaphis graminum (strain Sg).